Here is a 193-residue protein sequence, read N- to C-terminus: MPKGCLVITVSGLAGSGTTTLCRNLAKHYGFKHIYAGLIFRQMAKEMGMTLEEFQKYVELHPEIDREIDRRQIEAAKECNVVIEGRLAGWMVKNADLKIWLDAPIMERAKRVAKREGISVEEAFVKIAEREKQNRKRYLNLYGIDIEDKSIYDLIINTAHWGPDGVFAIVKAAIDHLSPSGDAGEDEKEKEVG.

Gly12 to Thr20 provides a ligand contact to ATP.

Belongs to the cytidylate kinase family. Type 2 subfamily.

The protein resides in the cytoplasm. It catalyses the reaction CMP + ATP = CDP + ADP. The catalysed reaction is dCMP + ATP = dCDP + ADP. The polypeptide is Cytidylate kinase (Thermococcus kodakarensis (strain ATCC BAA-918 / JCM 12380 / KOD1) (Pyrococcus kodakaraensis (strain KOD1))).